Here is a 352-residue protein sequence, read N- to C-terminus: Rhodopsin (352 aa).

Residues 1–36 (MNGTEGPFFYIPMVNTTGVVRSPYEYPQYYLVNPAA) lie on the Extracellular side of the membrane. Residues asparagine 2 and asparagine 15 are each glycosylated (N-linked (GlcNAc...) asparagine). A helical transmembrane segment spans residues 37 to 61 (YACLGAYMFFLILVGFPVNFLTLYV). The Cytoplasmic portion of the chain corresponds to 62–73 (TLEHKKLRTPLN). The helical transmembrane segment at 74 to 96 (YILLNLAVADLFMVFGGFTTTIY) threads the bilayer. Residues 97–110 (TSMHGYFVLGRLGC) lie on the Extracellular side of the membrane. The cysteines at positions 110 and 187 are disulfide-linked. A helical membrane pass occupies residues 111–133 (NIEGFFATLGGEIALWSLVVLAI). A 'Ionic lock' involved in activated form stabilization motif is present at residues 134-136 (ERW). Residues 134–152 (ERWVVVCKPISNFRFGENH) are Cytoplasmic-facing. A helical transmembrane segment spans residues 153–173 (AIMGVAFTWFMASACAVPPLV). The Extracellular segment spans residues 174-202 (GWSRYIPEGMQCSCGIDYYTRAEGFNNES). Asparagine 200 carries an N-linked (GlcNAc...) asparagine glycan. Residues 203–224 (FVIYMFTVHFCIPLAVVGFCYG) form a helical membrane-spanning segment. Residues 225–252 (RLLCAVKEAAAAQQESETTQRAEREVSR) lie on the Cytoplasmic side of the membrane. A helical transmembrane segment spans residues 253 to 274 (MVVIMVIGFLVCWLPYASVAWY). Topologically, residues 275 to 286 (IFTHQGSEFGPL) are extracellular. The helical transmembrane segment at 287–308 (FMTIPAFFAKSSSIYNPMIYIC) threads the bilayer. The residue at position 296 (lysine 296) is an N6-(retinylidene)lysine. At 309-352 (MNKQFRHCMITTLCCGKNPFEEEEGASTTKTEASSVSSSSVSPA) the chain is on the cytoplasmic side. S-palmitoyl cysteine attachment occurs at residues cysteine 322 and cysteine 323. The segment at 331–352 (EEGASTTKTEASSVSSSSVSPA) is disordered. The span at 342–352 (SSVSSSSVSPA) shows a compositional bias: low complexity.

The protein belongs to the G-protein coupled receptor 1 family. Opsin subfamily. Phosphorylated on some or all of the serine and threonine residues present in the C-terminal region. In terms of processing, contains one covalently linked retinal chromophore.

It localises to the membrane. Its subcellular location is the cell projection. The protein resides in the cilium. It is found in the photoreceptor outer segment. Functionally, photoreceptor required for image-forming vision at low light intensity. While most salt water fish species use retinal as chromophore, most freshwater fish use 3-dehydroretinal, or a mixture of retinal and 3-dehydroretinal. Light-induced isomerization of 11-cis to all-trans retinal triggers a conformational change that activates signaling via G-proteins. Subsequent receptor phosphorylation mediates displacement of the bound G-protein alpha subunit by arrestin and terminates signaling. The sequence is that of Rhodopsin (rho) from Gobius niger (Black goby).